Consider the following 438-residue polypeptide: Adenylyltransferase and sulfurtransferase MOCS3 (438 aa).

Residues G80, D101, 108-112 (TNLHR), K125, and 169-170 (DN) contribute to the ATP site. Residues C210 and C213 each coordinate Zn(2+). The active-site Glycyl thioester intermediate; for adenylyltransferase activity is C227. Positions 285 and 288 each coordinate Zn(2+). The 102-residue stretch at 335–436 (SKQRHVLVDV…WTRNVDKEFP (102 aa)) folds into the Rhodanese domain. The active-site Cysteine persulfide intermediate; for sulfurtransferase activity is the C392.

In the N-terminal section; belongs to the HesA/MoeB/ThiF family. UBA4 subfamily. It depends on Zn(2+) as a cofactor.

It is found in the cytoplasm. It localises to the cytosol. It carries out the reaction [molybdopterin-synthase sulfur-carrier protein]-C-terminal Gly-Gly + ATP + H(+) = [molybdopterin-synthase sulfur-carrier protein]-C-terminal Gly-Gly-AMP + diphosphate. The catalysed reaction is [molybdopterin-synthase sulfur-carrier protein]-C-terminal Gly-Gly-AMP + S-sulfanyl-L-cysteinyl-[cysteine desulfurase] + AH2 = [molybdopterin-synthase sulfur-carrier protein]-C-terminal-Gly-aminoethanethioate + L-cysteinyl-[cysteine desulfurase] + A + AMP + 2 H(+). The protein operates within tRNA modification; 5-methoxycarbonylmethyl-2-thiouridine-tRNA biosynthesis. It participates in cofactor biosynthesis; molybdopterin biosynthesis. Plays a central role in 2-thiolation of mcm(5)S(2)U at tRNA wobble positions of cytosolic tRNA(Lys), tRNA(Glu) and tRNA(Gln). Also essential during biosynthesis of the molybdenum cofactor. Acts by mediating the C-terminal thiocarboxylation of sulfur carriers URM1 and MOCS2A. Its N-terminus first activates URM1 and MOCS2A as acyl-adenylates (-COAMP), then the persulfide sulfur on the catalytic cysteine is transferred to URM1 and MOCS2A to form thiocarboxylation (-COSH) of their C-terminus. The reaction probably involves hydrogen sulfide that is generated from the persulfide intermediate and that acts as a nucleophile towards URM1 and MOCS2A. Subsequently, a transient disulfide bond is formed. Does not use thiosulfate as sulfur donor; NFS1 probably acting as a sulfur donor for thiocarboxylation reactions. The sequence is that of Adenylyltransferase and sulfurtransferase MOCS3 from Culex quinquefasciatus (Southern house mosquito).